Here is a 173-residue protein sequence, read N- to C-terminus: Small ribosomal subunit protein uS7 (173 aa).

Belongs to the universal ribosomal protein uS7 family. Part of the 30S ribosomal subunit. Contacts proteins S9 and S11.

Its function is as follows. One of the primary rRNA binding proteins, it binds directly to 16S rRNA where it nucleates assembly of the head domain of the 30S subunit. Is located at the subunit interface close to the decoding center, probably blocks exit of the E-site tRNA. The polypeptide is Small ribosomal subunit protein uS7 (Orientia tsutsugamushi (strain Boryong) (Rickettsia tsutsugamushi)).